Here is a 43-residue protein sequence, read N- to C-terminus: Large ribosomal subunit protein uL11 (43 aa).

It belongs to the universal ribosomal protein uL11 family. As to quaternary structure, part of the ribosomal stalk of the 50S ribosomal subunit. Interacts with L10 and the large rRNA to form the base of the stalk. L10 forms an elongated spine to which L12 dimers bind in a sequential fashion forming a multimeric L10(L12)X complex. In terms of processing, one or more lysine residues are methylated.

Forms part of the ribosomal stalk which helps the ribosome interact with GTP-bound translation factors. This Streptomyces galbus protein is Large ribosomal subunit protein uL11 (rplK).